The primary structure comprises 163 residues: MAASLIRQTKLLSVFSSAGCFRSIHSTAACLKNRAARIRVGKGDRPLTYEQAHHPHHISHRKGWLSQHTGNLHAEGGAAERVLEDVFIRRFIFGTFHSCLADELVIKRRGNVLIICAVMIQKLLPSKFYFLLGYTEELLSHFYKCPVKMELQLVDEKVVYKYL.

A mitochondrion-targeting transit peptide spans 1-31; the sequence is MAASLIRQTKLLSVFSSAGCFRSIHSTAACL.

The protein belongs to the universal ribosomal protein uS3 family. Component of the mitochondrial ribosome small subunit (28S) which comprises a 12S rRNA and about 30 distinct proteins.

It is found in the mitochondrion. The protein is Small ribosomal subunit protein uS3m (mrps24) of Danio rerio (Zebrafish).